An 82-amino-acid polypeptide reads, in one-letter code: UPF0154 protein SMU_1719c (82 aa).

A helical transmembrane segment spans residues 4–24 (FLWILLVIIALLAGLVGGTFI).

It belongs to the UPF0154 family.

The protein resides in the membrane. The polypeptide is UPF0154 protein SMU_1719c (Streptococcus mutans serotype c (strain ATCC 700610 / UA159)).